The primary structure comprises 458 residues: Protein adenylyltransferase FICD (458 aa).

Topologically, residues 1 to 23 (MILMPMASVVAVAEPKWVSVWGR) are cytoplasmic. A helical; Signal-anchor for type II membrane protein membrane pass occupies residues 24–44 (FLWMTLLSMALGSLLALLLPL). The Lumenal portion of the chain corresponds to 45–458 (GAVEEQCLAV…GFKETLPVRP (414 aa)). Serine 79 is subject to O-AMP-serine; by autocatalysis. The residue at position 80 (threonine 80) is an O-AMP-threonine; by autocatalysis. TPR repeat units follow at residues 106-139 (AKAA…DPGF) and 140-173 (VDAL…SPFH). O-AMP-threonine; by autocatalysis is present on threonine 183. The Inhibitory (S/T)XXXE(G/N) motif motif lies at 230-235 (TVAIEG). Residue glutamate 234 participates in ATP binding. The N-linked (GlcNAc...) asparagine glycan is linked to asparagine 275. One can recognise a Fido domain in the interval 285–420 (VTIDHMLEIH…VRPFIRFIAK (136 aa)). 316 to 319 (VGHH) is a binding site for ATP. Histidine 363 is a catalytic residue. Residues 367 to 374 (DGNGRTSR), 399 to 400 (YY), and asparagine 407 contribute to the ATP site.

It belongs to the fic family. Homodimer. Interacts with HD. Requires Mg(2+) as cofactor. Mn(2+) serves as cofactor. Auto-AMPylated in vitro.

The protein resides in the endoplasmic reticulum membrane. The catalysed reaction is L-tyrosyl-[protein] + ATP = O-(5'-adenylyl)-L-tyrosyl-[protein] + diphosphate. The enzyme catalyses 3-O-(5'-adenylyl)-L-threonyl-[protein] + H2O = L-threonyl-[protein] + AMP + H(+). It catalyses the reaction L-threonyl-[protein] + ATP = 3-O-(5'-adenylyl)-L-threonyl-[protein] + diphosphate. Its activity is regulated as follows. The side chain of Glu-234 determines which of the two opposing activities (AMPylase or de-AMPylase) will take place. In response to endoplasmic reticulum stress, mediates de-AMPylase activity. Adenylyltransferase activity is inhibited by the inhibitory helix present at the N-terminus: Glu-234 binds ATP and competes with ATP-binding at Arg-374, thereby preventing adenylyltransferase activity. In unstressed cells, disengagement of Glu-234 promotes adenylyltransferase activity. Activation dissociates ATP-binding from Glu-234, allowing ordered binding of the entire ATP moiety with the alpha-phosphate in an orientation that is productive for accepting an incoming target hydroxyl side chain. Protein that can both mediate the addition of adenosine 5'-monophosphate (AMP) to specific residues of target proteins (AMPylation), and the removal of the same modification from target proteins (de-AMPylation), depending on the context. The side chain of Glu-231 determines which of the two opposing activities (AMPylase or de-AMPylase) will take place. Acts as a key regulator of the ERN1/IRE1-mediated unfolded protein response (UPR) by mediating AMPylation or de-AMPylation of HSPA5/BiP. In unstressed cells, acts as an adenylyltransferase by mediating AMPylation of HSPA5/BiP at 'Thr-518', thereby inactivating it. In response to endoplasmic reticulum stress, acts as a phosphodiesterase by mediating removal of ATP (de-AMPylation) from HSPA5/BiP at 'Thr-518', leading to restore HSPA5/BiP activity. Although it is able to AMPylate RhoA, Rac and Cdc42 Rho GTPases in vitro, Rho GTPases do not constitute physiological substrates. This is Protein adenylyltransferase FICD from Rattus norvegicus (Rat).